Reading from the N-terminus, the 412-residue chain is COP9 signalosome complex subunit 4 (412 aa).

The region spanning 216–378 (EAAQRYYELS…GILHFEDSNP (163 aa)) is the PCI domain.

Belongs to the CSN4 family. In terms of assembly, component of the CSN complex, probably composed of csn-1, csn-2, csn-3, csn-4, csn-5, csn-6 and csn-7. Within the complex it probably interacts directly with csn-2 and csn-4. In the complex, it probably interacts directly with csn-1, csn-2, csn-3 and csn-6. Interacts with itself.

The protein resides in the cytoplasm. It is found in the nucleus. Functionally, component of the COP9 signalosome complex (CSN), a complex involved in various cellular and developmental processes. The CSN complex is an essential regulator of the ubiquitin (Ubl) conjugation pathway by mediating the deneddylation of the cullin subunits of the SCF-type E3 ligase complexes, leading to decrease the Ubl ligase activity of SCF. The CSN complex plays an essential role in embryogenesis and oogenesis and is required to regulate microtubule stability in the early embryo. Mediates mei-3/katanin targeting for degradation at the meiosis to mitosis transition via deneddylation of cul-3. The chain is COP9 signalosome complex subunit 4 (csn-4) from Caenorhabditis elegans.